A 438-amino-acid polypeptide reads, in one-letter code: Succinyl-CoA:glutarate CoA-transferase (438 aa).

The transit peptide at 1–31 (MLATLARVAALRRTCLFSGRGGGRGLWTGRP) directs the protein to the mitochondrion. D205 acts as the Nucleophile in catalysis. Position 394 is an N6-acetyllysine (K394).

Belongs to the CoA-transferase III family. Highly expressed in kidney. Intermediate expression in liver, skeletal muscle and pancreas. Little to no expression detected in other tissues examined.

It localises to the mitochondrion. It carries out the reaction glutarate + succinyl-CoA = glutaryl-CoA + succinate. It catalyses the reaction 3-hydroxy-3-methylglutarate + succinyl-CoA = (3S)-3-hydroxy-3-methylglutaryl-CoA + succinate. The enzyme catalyses 3-hydroxy-3-methylglutarate + glutaryl-CoA = (3S)-3-hydroxy-3-methylglutaryl-CoA + glutarate. The catalysed reaction is hexanedioate + glutaryl-CoA = hexanedioyl-CoA + glutarate. It carries out the reaction itaconate + glutaryl-CoA = itaconyl-CoA + glutarate. It catalyses the reaction itaconate + succinyl-CoA = itaconyl-CoA + succinate. With respect to regulation, inhibited by valsartan and losartan carboxylate. Functionally, coenzyme A (CoA) transferase that reversibly catalyzes the transfer of a CoA moiety from a dicarboxyl-CoA to a dicarboxylate in a metabolite recycling process. Displays preference for succinyl-CoA and glutarate-CoA as dicarboxyl-CoA donors and glutarate, succinate, adipate/hexanedioate, itaconate and 3-hydroxy-3-methylglutarate as dicarboxylate acceptors. Acts on intermediates or end products of lysine and tryptophan degradation pathway, in particular catalyzes succinyl-CoA-dependent reesterification of free glutarate into glutaryl-CoA to prevent renal excretion of glutarate. Upon inflammation, may convert macrophage-derived itaconate to itaconyl-CoA in erythroid precursors where it negatively regulates the TCA cycle and heme synthesis to limit erythroid differentiation in the context of stress erythropoiesis. This Homo sapiens (Human) protein is Succinyl-CoA:glutarate CoA-transferase.